A 233-amino-acid polypeptide reads, in one-letter code: Purine nucleoside phosphorylase DeoD-type (233 aa).

An a purine D-ribonucleoside-binding site is contributed by His-4. Phosphate is bound by residues Gly-20, Arg-24, Arg-43, and 87-90; that span reads RIGT. Residues 179-181 and 203-204 each bind a purine D-ribonucleoside; these read EME and SD. The active-site Proton donor is Asp-204.

Belongs to the PNP/UDP phosphorylase family. Homohexamer; trimer of homodimers.

It carries out the reaction a purine D-ribonucleoside + phosphate = a purine nucleobase + alpha-D-ribose 1-phosphate. It catalyses the reaction a purine 2'-deoxy-D-ribonucleoside + phosphate = a purine nucleobase + 2-deoxy-alpha-D-ribose 1-phosphate. Functionally, catalyzes the reversible phosphorolytic breakdown of the N-glycosidic bond in the beta-(deoxy)ribonucleoside molecules, with the formation of the corresponding free purine bases and pentose-1-phosphate. This Thermoanaerobacter pseudethanolicus (strain ATCC 33223 / 39E) (Clostridium thermohydrosulfuricum) protein is Purine nucleoside phosphorylase DeoD-type.